We begin with the raw amino-acid sequence, 564 residues long: Plant UBX domain-containing protein 8 (564 aa).

Alanine 2 carries the N-acetylalanine modification. The 43-residue stretch at 2 to 44 (ATPNQEAIDTFISITGASDAVALQKLEEHRGDLNQAVNAYFSE) folds into the UBA-like domain. 2 consecutive UIM domains span residues 198–217 (IEEE…AEGS) and 230–249 (EDDD…AEEE). The segment at 210–229 (SKKEAEGSSNPLLEERPLHM) is disordered. Disordered stretches follow at residues 267–358 (AVTA…EEHD), 371–423 (IPET…DKEM), and 443–483 (FLEE…QADE). Residues 291-300 (FDDDSDDVDE) are compositionally biased toward acidic residues. Phosphoserine occurs at positions 295, 324, 326, and 328. The segment covering 322–334 (DRSRSGSPEEEHA) has biased composition (basic and acidic residues). Residues 381 to 395 (FLPPQPRAQPRPPSP) are compositionally biased toward pro residues. The stretch at 412 to 478 (VASLQADRDK…DAKEASLPKE (67 aa)) forms a coiled coil. Residues 443 to 475 (FLEEEKKKEEEAQRKLEEEQELERQLDAKEASL) are compositionally biased toward basic and acidic residues. A UBX domain is found at 482–560 (DEENAITLLI…GLTSKQEALF (79 aa)).

As to quaternary structure, interacts with RABA5C/ARA-4.

This chain is Plant UBX domain-containing protein 8, found in Arabidopsis thaliana (Mouse-ear cress).